Here is a 275-residue protein sequence, read N- to C-terminus: NADH-quinone oxidoreductase subunit E 1 (275 aa).

4 residues coordinate [2Fe-2S] cluster: Cys-99, Cys-104, Cys-140, and Cys-144. Residues 200–275 (LQAPEPVEEK…DKSKPAKKPR (76 aa)) form a disordered region. The segment covering 206–221 (VEEKKSVRASKAKDEQ) has biased composition (basic and acidic residues). Residues 231–242 (AKPSTATDVTNP) show a composition bias toward polar residues. Residues 243-256 (TLKTPATARKAAAK) show a composition bias toward low complexity. Over residues 258-269 (VKIEGETVDKSK) the composition is skewed to basic and acidic residues.

Belongs to the complex I 24 kDa subunit family. [2Fe-2S] cluster serves as cofactor.

The catalysed reaction is a quinone + NADH + 5 H(+)(in) = a quinol + NAD(+) + 4 H(+)(out). In terms of biological role, NDH-1 shuttles electrons from NADH, via FMN and iron-sulfur (Fe-S) centers, to quinones in the respiratory chain. The immediate electron acceptor for the enzyme in this species is believed to be ubiquinone. Couples the redox reaction to proton translocation (for every two electrons transferred, four hydrogen ions are translocated across the cytoplasmic membrane), and thus conserves the redox energy in a proton gradient. The chain is NADH-quinone oxidoreductase subunit E 1 (nuoE1) from Rhizobium meliloti (strain 1021) (Ensifer meliloti).